The sequence spans 322 residues: Putative T-box protein 11 (322 aa).

Positions L16–K185 form a DNA-binding region, T-box. Over residues T171–G182 the composition is skewed to polar residues. The interval T171 to I214 is disordered.

Its subcellular location is the nucleus. This Caenorhabditis elegans protein is Putative T-box protein 11 (tbx-11).